A 247-amino-acid polypeptide reads, in one-letter code: Sulfate transporter CysZ (247 aa).

The next 5 helical transmembrane spans lie at 29–49 (FVVLPLLANIILVGGAIFYLF), 66–86 (FLSWLTYILWPLLALTILATF), 141–160 (LLYILPKAIGLFLLLLIPAL), 164–186 (VGPVLWFIFTAWMLAIQYCDYPF), and 212–232 (VLVSVFTTIPILNLIVMPVAI).

This sequence belongs to the CysZ family.

It localises to the cell inner membrane. High affinity, high specificity proton-dependent sulfate transporter, which mediates sulfate uptake. Provides the sulfur source for the cysteine synthesis pathway. The sequence is that of Sulfate transporter CysZ from Vibrio parahaemolyticus serotype O3:K6 (strain RIMD 2210633).